We begin with the raw amino-acid sequence, 188 residues long: Cytochrome b-245 chaperone 1 homolog (188 aa).

Residues 20–42 traverse the membrane as a helical segment; sequence SIRSWSLLVGISSVGLAAAYYST.

This sequence belongs to the CYBC1 family.

It is found in the endoplasmic reticulum membrane. Functionally, functions as a chaperone necessary for a stable expression of the CYBA and CYBB subunits of the cytochrome b-245 heterodimer. The chain is Cytochrome b-245 chaperone 1 homolog (cybc1) from Xenopus tropicalis (Western clawed frog).